Consider the following 91-residue polypeptide: Non-specific lipid-transfer protein 1 (91 aa).

Disulfide bonds link C4/C51, C14/C28, C29/C74, and C49/C88.

In terms of tissue distribution, detected in seeds (at protein level).

In terms of biological role, plant non-specific lipid-transfer proteins transfer phospholipids as well as galactolipids across membranes. May play a role in wax or cutin deposition in the cell walls of expanding epidermal cells and certain secretory tissues. This Trachyspermum ammi (Ajowan caraway) protein is Non-specific lipid-transfer protein 1.